Here is a 247-residue protein sequence, read N- to C-terminus: tRNA pseudouridine synthase A (247 aa).

Asp-52 serves as the catalytic Nucleophile. Position 113 (Tyr-113) interacts with substrate.

This sequence belongs to the tRNA pseudouridine synthase TruA family. Homodimer.

The enzyme catalyses uridine(38/39/40) in tRNA = pseudouridine(38/39/40) in tRNA. Its function is as follows. Formation of pseudouridine at positions 38, 39 and 40 in the anticodon stem and loop of transfer RNAs. The polypeptide is tRNA pseudouridine synthase A (Rhizobium meliloti (strain 1021) (Ensifer meliloti)).